A 511-amino-acid chain; its full sequence is Probable eukaryotic translation initiation factor 4H (511 aa).

Disordered regions lie at residues 25–63 and 154–511; these read SWADDDFDLPTAPAAREESGSGLKRGDPGYFESLPDRGS and TIRV…EVKI. Basic and acidic residues predominate over residues 39–51; sequence AREESGSGLKRGD. The RRM domain occupies 86–162; sequence FTAFIGNLSF…RTIRVNVAEA (77 aa). The span at 179 to 196 shows a compositional bias: polar residues; sequence WRRSTPLASRESSSQPSR. 2 stretches are compositionally biased toward basic and acidic residues: residues 230–247 and 261–270; these read VRRDSSGPGHTREPRDPG and LAEKVDRDVP. Residues 285 to 318 are compositionally biased toward polar residues; it reads LADTEQTWSRGTKLRTPTTTSRQSSADSTPSSGA. The segment covering 331 to 349 has biased composition (low complexity); it reads TAGSPSATANATPAAPASG. Serine 334 carries the phosphoserine modification. 2 stretches are compositionally biased toward basic and acidic residues: residues 360 to 388 and 394 to 419; these read AAREKAAEEKLAQREGERRKAREEAEKQK and KPVEGEKLGWREEKLRSIKAAQDKVA. The span at 420–434 shows a compositional bias: low complexity; it reads GKPTTAPATTTNTGA. Residues 438 to 448 are compositionally biased toward basic and acidic residues; it reads GSADRAKKDEQ. Residues 451–467 are compositionally biased toward polar residues; the sequence is EQVQPSRKSSQTGATSE. Positions 502–511 are enriched in basic and acidic residues; sequence VTKGVEEVKI.

The protein resides in the cytoplasm. The protein localises to the P-body. In terms of biological role, probable translation initiation factor. This is Probable eukaryotic translation initiation factor 4H from Cryptococcus neoformans var. grubii serotype A (strain H99 / ATCC 208821 / CBS 10515 / FGSC 9487) (Filobasidiella neoformans var. grubii).